The following is a 450-amino-acid chain: Glucose-6-phosphate isomerase (450 aa).

E291 (proton donor) is an active-site residue. Residues H312 and K426 contribute to the active site.

Belongs to the GPI family.

It is found in the cytoplasm. It catalyses the reaction alpha-D-glucose 6-phosphate = beta-D-fructose 6-phosphate. The protein operates within carbohydrate biosynthesis; gluconeogenesis. It participates in carbohydrate degradation; glycolysis; D-glyceraldehyde 3-phosphate and glycerone phosphate from D-glucose: step 2/4. Its function is as follows. Catalyzes the reversible isomerization of glucose-6-phosphate to fructose-6-phosphate. This Clostridium novyi (strain NT) protein is Glucose-6-phosphate isomerase.